Here is a 459-residue protein sequence, read N- to C-terminus: Cysteine--tRNA ligase (459 aa).

C28 is a binding site for Zn(2+). Positions 30-40 (VTVYDLCHFGH) match the 'HIGH' region motif. Residues C209, H234, and E238 each coordinate Zn(2+). A 'KMSKS' region motif is present at residues 266–270 (KMSKS). K269 lines the ATP pocket.

Belongs to the class-I aminoacyl-tRNA synthetase family. In terms of assembly, monomer. Requires Zn(2+) as cofactor.

It localises to the cytoplasm. The enzyme catalyses tRNA(Cys) + L-cysteine + ATP = L-cysteinyl-tRNA(Cys) + AMP + diphosphate. The polypeptide is Cysteine--tRNA ligase (Actinobacillus pleuropneumoniae serotype 3 (strain JL03)).